The sequence spans 199 residues: Chaperone protein TorD (199 aa).

Belongs to the TorD/DmsD family. TorD subfamily.

It is found in the cytoplasm. Involved in the biogenesis of TorA. Acts on TorA before the insertion of the molybdenum cofactor and, as a result, probably favors a conformation of the apoenzyme that is competent for acquiring the cofactor. The sequence is that of Chaperone protein TorD from Actinobacillus pleuropneumoniae serotype 7 (strain AP76).